A 490-amino-acid chain; its full sequence is Pleckstrin homology domain-containing family O member 2 (490 aa).

One can recognise a PH domain in the interval 18–119 (MVDKAGWIKK…WIKALNEGIN (102 aa)). Residues Ser164 and Ser167 each carry the phosphoserine modification. Residues 173–402 (LDLDVPDSGP…DLLGEGPRHP (230 aa)) form a disordered region. Residues 230-243 (APTPVSASSEVSPE) show a composition bias toward low complexity. Thr232 is subject to Phosphothreonine. Phosphoserine is present on residues Ser235, Ser237, and Ser238. A compositionally biased stretch (acidic residues) spans 244-257 (SQEDSETPAEEDSG). A Phosphoserine modification is found at Ser273. Over residues 277-297 (PSPQEAPAAESAEPSQAPCSE) the composition is skewed to low complexity. Phosphothreonine is present on residues Thr298 and Thr311. A phosphoserine mark is found at Ser390 and Ser468. Residues 439–481 (SAETLLSQAVEQLRQATQVLQEMRDLGELSQEAPGLREKRKEL) are a coiled coil.

The sequence is that of Pleckstrin homology domain-containing family O member 2 (PLEKHO2) from Homo sapiens (Human).